The chain runs to 221 residues: Deoxyribose-phosphate aldolase 1 (221 aa).

The active-site Proton donor/acceptor is Asp-89. The active-site Schiff-base intermediate with acetaldehyde is Lys-152. Lys-181 serves as the catalytic Proton donor/acceptor.

Belongs to the DeoC/FbaB aldolase family. DeoC type 1 subfamily.

The protein resides in the cytoplasm. It carries out the reaction 2-deoxy-D-ribose 5-phosphate = D-glyceraldehyde 3-phosphate + acetaldehyde. Its pathway is carbohydrate degradation; 2-deoxy-D-ribose 1-phosphate degradation; D-glyceraldehyde 3-phosphate and acetaldehyde from 2-deoxy-alpha-D-ribose 1-phosphate: step 2/2. Catalyzes a reversible aldol reaction between acetaldehyde and D-glyceraldehyde 3-phosphate to generate 2-deoxy-D-ribose 5-phosphate. This chain is Deoxyribose-phosphate aldolase 1, found in Oceanobacillus iheyensis (strain DSM 14371 / CIP 107618 / JCM 11309 / KCTC 3954 / HTE831).